Consider the following 160-residue polypeptide: MTPEEIARLPYRPCVGVMLMNGQGEVFVGQRRDNNVAAWQMPQGGVEKGEDPRAAALRELWEETGVNPELAEVVAETEDWLPYDLPYDLVPKLWKGRYRGQEQKWFLMRFHGADSDINIATEHPEFSQWRWLPAADLVENIVPFKRDVYVAVLDAFEAHL.

The 145-residue stretch at 10 to 154 folds into the Nudix hydrolase domain; that stretch reads PYRPCVGVML…KRDVYVAVLD (145 aa). Positions 44–65 match the Nudix box motif; that stretch reads GGVEKGEDPRAAALRELWEETG.

It belongs to the Nudix hydrolase family. RppH subfamily. A divalent metal cation is required as a cofactor.

Accelerates the degradation of transcripts by removing pyrophosphate from the 5'-end of triphosphorylated RNA, leading to a more labile monophosphorylated state that can stimulate subsequent ribonuclease cleavage. This chain is RNA pyrophosphohydrolase, found in Roseobacter denitrificans (strain ATCC 33942 / OCh 114) (Erythrobacter sp. (strain OCh 114)).